The chain runs to 411 residues: Tyrosine--tRNA ligase (411 aa).

Position 33 (Tyr33) interacts with L-tyrosine. Positions 38 to 47 (PTADSLHLGN) match the 'HIGH' region motif. L-tyrosine-binding residues include Tyr160 and Gln164. The 'KMSKS' region motif lies at 222–226 (KFGKS). Lys225 lines the ATP pocket. One can recognise an S4 RNA-binding domain in the interval 346 to 410 (VNLVNFLVEN…GKKKILICKV (65 aa)).

Belongs to the class-I aminoacyl-tRNA synthetase family. TyrS type 1 subfamily. In terms of assembly, homodimer.

The protein resides in the cytoplasm. The catalysed reaction is tRNA(Tyr) + L-tyrosine + ATP = L-tyrosyl-tRNA(Tyr) + AMP + diphosphate + H(+). Functionally, catalyzes the attachment of tyrosine to tRNA(Tyr) in a two-step reaction: tyrosine is first activated by ATP to form Tyr-AMP and then transferred to the acceptor end of tRNA(Tyr). The sequence is that of Tyrosine--tRNA ligase from Mycoplasmopsis synoviae (strain 53) (Mycoplasma synoviae).